The primary structure comprises 412 residues: Phosphatidylinositol 3,4,5-trisphosphate 3-phosphatase and protein-tyrosine-phosphatase PTEN1 (412 aa).

The Phosphatase tensin-type domain occupies 42 to 211 (RRLIIGGYDL…KYWSDLLSFS (170 aa)). Cysteine 152 serves as the catalytic Phosphocysteine intermediate. In terms of domain architecture, C2 tensin-type spans 239 to 396 (VDSVFFVVSE…FSLELLFGPA (158 aa)).

It belongs to the PTEN phosphatase protein family. Expressed exclusively in pollen grains during the late stage of development (at protein level).

It carries out the reaction O-phospho-L-tyrosyl-[protein] + H2O = L-tyrosyl-[protein] + phosphate. The enzyme catalyses a 1,2-diacyl-sn-glycero-3-phospho-(1D-myo-inositol-3,4,5-trisphosphate) + H2O = a 1,2-diacyl-sn-glycero-3-phospho-(1D-myo-inositol-4,5-bisphosphate) + phosphate. Inhibited by vanadate. Functionally, protein tyrosine phosphatase that also exhibits lipid phosphatase activity. Can use phosphatidylinositol substrates such as PtdIns(3,4,5)P(3) as substrate. Pollen-specific phosphatase required for pollen development. The chain is Phosphatidylinositol 3,4,5-trisphosphate 3-phosphatase and protein-tyrosine-phosphatase PTEN1 from Arabidopsis thaliana (Mouse-ear cress).